Consider the following 680-residue polypeptide: Putative cyclin-dependent serine/threonine-protein kinase DDB_G0272797/DDB_G0274007 (680 aa).

Positions 4–381 (YIILSKCGQG…SLEALEHPWF (378 aa)) constitute a Protein kinase domain. ATP-binding positions include 10–18 (CGQGTYGSV) and lysine 33. The active-site Proton acceptor is the aspartate 125. Disordered regions lie at residues 243-299 (QQQQ…LQSP), 409-444 (RQLQ…QRQH), 483-507 (LAQH…QHQQ), and 597-680 (QQQQ…KSNG). Over residues 257–286 (NNNNNNNNNNNNNNNNNNNNNNNNNNNNNN) the composition is skewed to low complexity. The span at 287–297 (KYNNISTSCLQ) shows a compositional bias: polar residues. Composition is skewed to low complexity over residues 410-444 (QLQQ…QRQH), 483-494 (LAQHQQYNSQQH), and 597-616 (QQQQ…PPQH). The segment covering 617-631 (QHQHQHQHQHQHQHQ) has biased composition (basic residues). Positions 632–642 (HQPQPQHQHQP) are enriched in low complexity. Over residues 643–655 (QPQPQPTPTPTPT) the composition is skewed to pro residues. The segment covering 656 to 680 (STPTTTTIPPTITTTIQPTISKSNG) has biased composition (low complexity).

It belongs to the protein kinase superfamily. CMGC Ser/Thr protein kinase family. CDC2/CDKX subfamily.

It catalyses the reaction L-seryl-[protein] + ATP = O-phospho-L-seryl-[protein] + ADP + H(+). It carries out the reaction L-threonyl-[protein] + ATP = O-phospho-L-threonyl-[protein] + ADP + H(+). This is Putative cyclin-dependent serine/threonine-protein kinase DDB_G0272797/DDB_G0274007 from Dictyostelium discoideum (Social amoeba).